Consider the following 110-residue polypeptide: uncharacterized protein (110 aa).

A run of 2 helical transmembrane segments spans residues 21–41 (IQLA…PQIC) and 63–83 (PSMI…IIVV).

The protein localises to the membrane. This is an uncharacterized protein from Saccharomyces cerevisiae (strain ATCC 204508 / S288c) (Baker's yeast).